We begin with the raw amino-acid sequence, 268 residues long: Undecaprenyl-diphosphatase 1 (268 aa).

Helical transmembrane passes span 5–25 (TIVEALLLGLLEGLTEFIPVS), 43–63 (GKAFEILIQLGAILAILSVYF), 81–101 (HFVIGILIAFLPAAIIGALAH), 107–127 (VLFESPRLICTMLIIGGVILL), 185–205 (AEFSFFLAIPTMVGAFAFDLF), 214–234 (ADLPIIAIGFVAAFVTALFVV), and 248–268 (LFGWWRLVVGIVGLVALMIWG).

It belongs to the UppP family.

It localises to the cell inner membrane. It catalyses the reaction di-trans,octa-cis-undecaprenyl diphosphate + H2O = di-trans,octa-cis-undecaprenyl phosphate + phosphate + H(+). Catalyzes the dephosphorylation of undecaprenyl diphosphate (UPP). Confers resistance to bacitracin. The chain is Undecaprenyl-diphosphatase 1 from Mesorhizobium japonicum (strain LMG 29417 / CECT 9101 / MAFF 303099) (Mesorhizobium loti (strain MAFF 303099)).